The primary structure comprises 110 residues: Prothymosin alpha (110 aa).

N-acetylmethionine is present on Met-1. A disordered region spans residues 1–110; sequence MSDAAVDTSS…TKKQKTDEDD (110 aa). Ser-2 is subject to N-acetylserine; in Prothymosin alpha, N-terminally processed. The residue at position 2 (Ser-2) is a Phosphoserine. Thr-8 is subject to Phosphothreonine. Ser-9 and Ser-10 each carry phosphoserine. 2 positions are modified to phosphothreonine: Thr-13 and Thr-14. Over residues 13–31 the composition is skewed to basic and acidic residues; that stretch reads TTKDLKEKKEVVEEAENGR. At Lys-15 the chain carries N6-acetyllysine; alternate. Lys-15 is subject to N6-succinyllysine; alternate. The segment covering 42-83 has biased composition (acidic residues); that stretch reads ENGEQEADNEVDEEEEEGGEEEEEEEEGDGEEEDGDEDEEAE. The segment covering 100 to 110 has biased composition (basic and acidic residues); sequence DTKKQKTDEDD. Thr-101 carries the phosphothreonine modification. At Lys-102 the chain carries N6-acetyllysine; alternate. Lys-102 participates in a covalent cross-link: Glycyl lysine isopeptide (Lys-Gly) (interchain with G-Cter in SUMO2); alternate. Thr-106 is subject to Phosphothreonine.

Belongs to the pro/parathymosin family. Interacts with NUPR1; regulates apoptotic process. Covalently linked to a small RNA of about 20 nucleotides.

It localises to the nucleus. Functionally, prothymosin alpha may mediate immune function by conferring resistance to certain opportunistic infections. In Pongo abelii (Sumatran orangutan), this protein is Prothymosin alpha (PTMA).